The following is a 237-amino-acid chain: Ribonuclease 3 (237 aa).

The region spanning 4-133 (LTELENSLGV…VLAAIYIDKG (130 aa)) is the RNase III domain. A Mg(2+)-binding site is contributed by Glu-46. Active-site residues include Asp-50 and Glu-122. Glu-122 lines the Mg(2+) pocket. Positions 160–229 (DYKSRLQELI…AKVALQQFEN (70 aa)) constitute a DRBM domain.

It belongs to the ribonuclease III family. In terms of assembly, homodimer. Mg(2+) is required as a cofactor.

It localises to the cytoplasm. The enzyme catalyses Endonucleolytic cleavage to 5'-phosphomonoester.. Functionally, digests double-stranded RNA. Involved in the processing of primary rRNA transcript to yield the immediate precursors to the large and small rRNAs (23S and 16S). Processes some mRNAs, and tRNAs when they are encoded in the rRNA operon. Processes pre-crRNA and tracrRNA of type II CRISPR loci if present in the organism. The sequence is that of Ribonuclease 3 from Dehalococcoides mccartyi (strain CBDB1).